The following is a 356-amino-acid chain: Dual-specificity RNA methyltransferase RlmN (356 aa).

Glu87 serves as the catalytic Proton acceptor. A Radical SAM core domain is found at 106-339 (QEAKYTICVS…CTIRDSKGID (234 aa)). Cys113 and Cys344 are disulfide-bonded. The [4Fe-4S] cluster site is built by Cys120, Cys124, and Cys127. Residues 170–171 (GE), Ser202, 225–227 (SLH), and Asn301 each bind S-adenosyl-L-methionine. The active-site S-methylcysteine intermediate is the Cys344.

The protein belongs to the radical SAM superfamily. RlmN family. The cofactor is [4Fe-4S] cluster.

Its subcellular location is the cytoplasm. It catalyses the reaction adenosine(2503) in 23S rRNA + 2 reduced [2Fe-2S]-[ferredoxin] + 2 S-adenosyl-L-methionine = 2-methyladenosine(2503) in 23S rRNA + 5'-deoxyadenosine + L-methionine + 2 oxidized [2Fe-2S]-[ferredoxin] + S-adenosyl-L-homocysteine. The catalysed reaction is adenosine(37) in tRNA + 2 reduced [2Fe-2S]-[ferredoxin] + 2 S-adenosyl-L-methionine = 2-methyladenosine(37) in tRNA + 5'-deoxyadenosine + L-methionine + 2 oxidized [2Fe-2S]-[ferredoxin] + S-adenosyl-L-homocysteine. In terms of biological role, specifically methylates position 2 of adenine 2503 in 23S rRNA and position 2 of adenine 37 in tRNAs. m2A2503 modification seems to play a crucial role in the proofreading step occurring at the peptidyl transferase center and thus would serve to optimize ribosomal fidelity. This Sulfurimonas denitrificans (strain ATCC 33889 / DSM 1251) (Thiomicrospira denitrificans (strain ATCC 33889 / DSM 1251)) protein is Dual-specificity RNA methyltransferase RlmN.